Here is a 138-residue protein sequence, read N- to C-terminus: uncharacterized protein (138 aa).

The disordered stretch occupies residues 1–73 (MCSAGQLLGG…NHTGEPVGDD (73 aa)). A compositionally biased stretch (gly residues) spans 7-18 (LLGGGGGGGGSG). Positions 19-29 (GERDEDRDALA) are enriched in basic and acidic residues. Residues 30–43 (ERAAAGTEQESGAS) are compositionally biased toward low complexity. A helical membrane pass occupies residues 106–126 (VIVIFFWVMLWFLGLPAFGLV).

Belongs to the FAM241 family.

Its subcellular location is the membrane. This is an uncharacterized protein from Bos taurus (Bovine).